The sequence spans 701 residues: Elongation factor G 2 (701 aa).

One can recognise a tr-type G domain in the interval Asn8–Ala290. GTP is bound by residues Ala17–Thr24, Asp88–His92, and Asn142–Asp145.

The protein belongs to the TRAFAC class translation factor GTPase superfamily. Classic translation factor GTPase family. EF-G/EF-2 subfamily.

Its subcellular location is the cytoplasm. Catalyzes the GTP-dependent ribosomal translocation step during translation elongation. During this step, the ribosome changes from the pre-translocational (PRE) to the post-translocational (POST) state as the newly formed A-site-bound peptidyl-tRNA and P-site-bound deacylated tRNA move to the P and E sites, respectively. Catalyzes the coordinated movement of the two tRNA molecules, the mRNA and conformational changes in the ribosome. The chain is Elongation factor G 2 from Pseudoalteromonas atlantica (strain T6c / ATCC BAA-1087).